The following is a 731-amino-acid chain: 1,4-alpha-glucan branching enzyme GlgB (731 aa).

D411 (nucleophile) is an active-site residue. The Proton donor role is filled by E464.

The protein belongs to the glycosyl hydrolase 13 family. GlgB subfamily. As to quaternary structure, monomer.

It catalyses the reaction Transfers a segment of a (1-&gt;4)-alpha-D-glucan chain to a primary hydroxy group in a similar glucan chain.. Its pathway is glycan biosynthesis; glycogen biosynthesis. Catalyzes the formation of the alpha-1,6-glucosidic linkages in glycogen by scission of a 1,4-alpha-linked oligosaccharide from growing alpha-1,4-glucan chains and the subsequent attachment of the oligosaccharide to the alpha-1,6 position. This chain is 1,4-alpha-glucan branching enzyme GlgB, found in Mycobacterium ulcerans (strain Agy99).